The primary structure comprises 186 residues: CASP-like protein 7 (186 aa).

The Cytoplasmic segment spans residues 1 to 26 (MKGGSIEAGEVSKDASPRKGVARGLS). The chain crosses the membrane as a helical span at residues 27–47 (IMDFILRIIAAVATLGSALAM). Residues 48–72 (GTTNETLPFATQFIKFRAEFDDLPS) are Extracellular-facing. An N-linked (GlcNAc...) asparagine glycan is attached at asparagine 51. A helical membrane pass occupies residues 73 to 93 (LVFFVMANAVVCGYLVLSLMI). The Cytoplasmic portion of the chain corresponds to 94–107 (SVFHILRSTPVKSR). The chain crosses the membrane as a helical span at residues 108–128 (ILLVALDTVMLSLVTASASAA). The Extracellular segment spans residues 129-162 (TSIVYIAHNGNTGANWFAICQQYNNFCERISGSL). A helical membrane pass occupies residues 163 to 183 (IGSYIAVALFIILIMLSLVAI). Residues 184 to 186 (SRN) are Cytoplasmic-facing.

This sequence belongs to the Casparian strip membrane proteins (CASP) family. In terms of assembly, homodimer and heterodimers.

It is found in the cell membrane. In terms of biological role, regulates membrane-cell wall junctions and localized cell wall deposition. Required for establishment of the Casparian strip membrane domain (CSD) and the subsequent formation of Casparian strips, a cell wall modification of the root endodermis that determines an apoplastic barrier between the intraorganismal apoplasm and the extraorganismal apoplasm and prevents lateral diffusion. The polypeptide is CASP-like protein 7 (Glycine max (Soybean)).